Here is a 249-residue protein sequence, read N- to C-terminus: Cobalt transport protein CbiM (249 aa).

The signal sequence occupies residues 1–27 (MKPLHRWLPVVIGAALLIIFESRAAYA). Transmembrane regions (helical) follow at residues 33–53 (GFLPPVWAGFWFIVVLPFWVL), 70–90 (LLLGFAAAFAFVLSALKIPSV), 102–122 (LGTILFGPLVMSVLGSIVLLF), 134–154 (TLGANAFSMAVVGPFVAWLIW), 161–181 (APIWLTVFLAAALADLFTYVV), and 207–227 (IFAVTQIPLAISEGILTVLIF).

Belongs to the CbiM family. In terms of assembly, forms an energy-coupling factor (ECF) transporter complex composed of an ATP-binding protein (A component, CbiO), a transmembrane protein (T component, CbiQ) and 2 possible substrate-capture proteins (S components, CbiM and CbiN) of unknown stoichimetry.

It localises to the cell membrane. It functions in the pathway cofactor biosynthesis; adenosylcobalamin biosynthesis. Part of the energy-coupling factor (ECF) transporter complex CbiMNOQ involved in cobalt import. The chain is Cobalt transport protein CbiM from Roseiflexus sp. (strain RS-1).